A 382-amino-acid polypeptide reads, in one-letter code: Low-specificity L-threonine aldolase (382 aa).

Lysine 214 carries the post-translational modification N6-(pyridoxal phosphate)lysine.

The protein belongs to the threonine aldolase family. In terms of assembly, homotetramer. It depends on pyridoxal 5'-phosphate as a cofactor.

It catalyses the reaction L-threonine = acetaldehyde + glycine. It carries out the reaction L-allo-threonine = acetaldehyde + glycine. Its pathway is amino-acid degradation; L-threonine degradation via aldolase pathway; acetaldehyde and glycine from L-threonine: step 1/1. The polypeptide is Low-specificity L-threonine aldolase (GLY1) (Eremothecium gossypii (strain ATCC 10895 / CBS 109.51 / FGSC 9923 / NRRL Y-1056) (Yeast)).